The sequence spans 463 residues: DNA polymerase subunit gamma-2, mitochondrial (463 aa).

The N-terminal 44 residues, 1-44 (MLLTLKNTGQLLVAACSKVARSLAKYHPRVNHHRHCVWCSKRGL), are a transit peptide targeting the mitochondrion.

As to quaternary structure, heterotrimer composed of a catalytic subunit and a homodimer of accessory subunits.

It localises to the mitochondrion. Mitochondrial polymerase processivity subunit. It regulates the polymerase and exonuclease activities promoting processive DNA synthesis. Binds to ss-DNA. The protein is DNA polymerase subunit gamma-2, mitochondrial (polg2) of Xenopus laevis (African clawed frog).